Consider the following 60-residue polypeptide: MDAVSQVPMEVVLPKHILDIWVIVLIILATIVIMTSLLLCPATAVIIYRMRTHPILSGAV.

A helical membrane pass occupies residues 20-40 (IWVIVLIILATIVIMTSLLLC).

It localises to the membrane. The sequence is that of Small integral membrane protein 3 (SMIM3) from Homo sapiens (Human).